Here is a 335-residue protein sequence, read N- to C-terminus: Nod factor export ATP-binding protein I (335 aa).

The ABC transporter domain occupies 37-267 (IDVASVTKSY…KIGCQVIEIY (231 aa)). ATP is bound at residue 69–76 (GPNGAGKS).

The protein belongs to the ABC transporter superfamily. Lipooligosaccharide exporter (TC 3.A.1.102) family. In terms of assembly, the complex is composed of two ATP-binding proteins (NodI) and two transmembrane proteins (NodJ).

The protein resides in the cell inner membrane. Its function is as follows. Part of the ABC transporter complex NodIJ involved in the export of the nodulation factors (Nod factors), the bacterial signal molecules that induce symbiosis and subsequent nodulation induction. Nod factors are LCO (lipo-chitin oligosaccharide), a modified beta-1,4-linked N-acetylglucosamine oligosaccharide. This subunit is responsible for energy coupling to the transport system. In Rhizobium meliloti (strain 1021) (Ensifer meliloti), this protein is Nod factor export ATP-binding protein I.